The chain runs to 213 residues: Protein Pars_0011 (213 aa).

Residues 8-201 (EEGRYLVKLA…EREPNEEVYQ (194 aa)) form the AMMECR1 domain.

In Pyrobaculum arsenaticum (strain DSM 13514 / JCM 11321 / PZ6), this protein is Protein Pars_0011.